The chain runs to 177 residues: NEDD8-conjugating enzyme ubc12 (177 aa).

Residues 23-167 form the UBC core domain; that stretch reads PAQIRIQKDV…VRTAMKGGLV (145 aa). Cys-105 functions as the Glycyl thioester intermediate in the catalytic mechanism.

It belongs to the ubiquitin-conjugating enzyme family. UBC12 subfamily.

The enzyme catalyses [E1 NEDD8-activating enzyme]-S-[NEDD8 protein]-yl-L-cysteine + [E2 NEDD8-conjugating enzyme]-L-cysteine = [E1 NEDD8-activating enzyme]-L-cysteine + [E2 NEDD8-conjugating enzyme]-S-[NEDD8-protein]-yl-L-cysteine.. It functions in the pathway protein modification; protein neddylation. In terms of biological role, accepts the ubiquitin-like protein NEDD8/RUB1 from the UBA3-ULA1 E1 complex and catalyzes its covalent attachment to other proteins. This is NEDD8-conjugating enzyme ubc12 (ubc12) from Schizosaccharomyces pombe (strain 972 / ATCC 24843) (Fission yeast).